Reading from the N-terminus, the 239-residue chain is Large ribosomal subunit protein eL32 (239 aa).

Acidic residues-rich tracts occupy residues 1-12 (MSDENDTPEELA) and 67-91 (VEAD…ADVE). Disordered regions lie at residues 1–23 (MSDE…SKAE) and 64–178 (GLEV…HPSG). Residues 92 to 113 (TELRARGLTEKTPDLSEDEQRL) show a composition bias toward basic and acidic residues. Positions 130 to 155 (YHKKKRTPTSWRRPKGTLSKQRRGIK) are enriched in basic residues.

It belongs to the eukaryotic ribosomal protein eL32 family.

This chain is Large ribosomal subunit protein eL32 (rpl32e), found in Halobacterium salinarum (strain ATCC 700922 / JCM 11081 / NRC-1) (Halobacterium halobium).